Consider the following 271-residue polypeptide: Putative phosphoenolpyruvate synthase regulatory protein (271 aa).

152–159 (GVSRCGKT) provides a ligand contact to ADP.

It belongs to the pyruvate, phosphate/water dikinase regulatory protein family. PSRP subfamily.

The enzyme catalyses [pyruvate, water dikinase] + ADP = [pyruvate, water dikinase]-phosphate + AMP + H(+). It carries out the reaction [pyruvate, water dikinase]-phosphate + phosphate + H(+) = [pyruvate, water dikinase] + diphosphate. Its function is as follows. Bifunctional serine/threonine kinase and phosphorylase involved in the regulation of the phosphoenolpyruvate synthase (PEPS) by catalyzing its phosphorylation/dephosphorylation. The polypeptide is Putative phosphoenolpyruvate synthase regulatory protein (Legionella pneumophila (strain Corby)).